The sequence spans 761 residues: uncharacterized protein (761 aa).

TPR repeat units follow at residues 35–68 (EEGK…SLNS), 69–102 (AQGL…SDVD), 103–136 (DALY…NPNK), 137–170 (VEIL…KPDF), 172–203 (EAEE…KNPN), 204–237 (EEVY…FPHD), 351–384 (LGVL…NPSA), and 419–452 (ASAG…VKEE). Residues 487 to 761 (KRPIFVLGMP…PKGLVGYTVG (275 aa)) are protein sulfotransferase-like.

In the C-terminal section; belongs to the protein sulfotransferase family.

This is an uncharacterized protein from Aquifex aeolicus (strain VF5).